Reading from the N-terminus, the 252-residue chain is Triosephosphate isomerase (252 aa).

10-12 provides a ligand contact to substrate; that stretch reads NWK. Histidine 96 acts as the Electrophile in catalysis. Glutamate 168 functions as the Proton acceptor in the catalytic mechanism. Substrate-binding positions include glycine 174, serine 214, and 235–236; that span reads GG.

The protein belongs to the triosephosphate isomerase family. As to quaternary structure, homodimer.

It is found in the cytoplasm. The catalysed reaction is D-glyceraldehyde 3-phosphate = dihydroxyacetone phosphate. The protein operates within carbohydrate biosynthesis; gluconeogenesis. Its pathway is carbohydrate degradation; glycolysis; D-glyceraldehyde 3-phosphate from glycerone phosphate: step 1/1. Functionally, involved in the gluconeogenesis. Catalyzes stereospecifically the conversion of dihydroxyacetone phosphate (DHAP) to D-glyceraldehyde-3-phosphate (G3P). This chain is Triosephosphate isomerase, found in Streptococcus pyogenes serotype M2 (strain MGAS10270).